Consider the following 105-residue polypeptide: Small ribosomal subunit protein uS10 (105 aa).

This sequence belongs to the universal ribosomal protein uS10 family. Part of the 30S ribosomal subunit.

In terms of biological role, involved in the binding of tRNA to the ribosomes. The polypeptide is Small ribosomal subunit protein uS10 (Synechocystis sp. (strain ATCC 27184 / PCC 6803 / Kazusa)).